Here is a 523-residue protein sequence, read N- to C-terminus: 2-isopropylmalate synthase (523 aa).

Positions 5 to 267 (VIIFDTTLRD…HTRINHQEIW (263 aa)) constitute a Pyruvate carboxyltransferase domain. Positions 14, 202, 204, and 238 each coordinate Mn(2+). A regulatory domain region spans residues 392 to 523 (RLEYFSVQSG…QNKEHNQETV (132 aa)).

This sequence belongs to the alpha-IPM synthase/homocitrate synthase family. LeuA type 1 subfamily. Homodimer. Requires Mn(2+) as cofactor.

It is found in the cytoplasm. The enzyme catalyses 3-methyl-2-oxobutanoate + acetyl-CoA + H2O = (2S)-2-isopropylmalate + CoA + H(+). The protein operates within amino-acid biosynthesis; L-leucine biosynthesis; L-leucine from 3-methyl-2-oxobutanoate: step 1/4. Its function is as follows. Catalyzes the condensation of the acetyl group of acetyl-CoA with 3-methyl-2-oxobutanoate (2-ketoisovalerate) to form 3-carboxy-3-hydroxy-4-methylpentanoate (2-isopropylmalate). The sequence is that of 2-isopropylmalate synthase from Cronobacter sakazakii (strain ATCC BAA-894) (Enterobacter sakazakii).